Consider the following 339-residue polypeptide: Phosphate acyltransferase (339 aa).

Belongs to the PlsX family. Homodimer. Probably interacts with PlsY.

The protein localises to the cytoplasm. The catalysed reaction is a fatty acyl-[ACP] + phosphate = an acyl phosphate + holo-[ACP]. It participates in lipid metabolism; phospholipid metabolism. Catalyzes the reversible formation of acyl-phosphate (acyl-PO(4)) from acyl-[acyl-carrier-protein] (acyl-ACP). This enzyme utilizes acyl-ACP as fatty acyl donor, but not acyl-CoA. In Dechloromonas aromatica (strain RCB), this protein is Phosphate acyltransferase.